Here is a 153-residue protein sequence, read N- to C-terminus: Large ribosomal subunit protein uL15 (153 aa).

Residues 1–47 (MRLHELSPAPGSRKDRKRVGRGDAGRGNYSGRGMKGQKARSGGATRP) are disordered.

Belongs to the universal ribosomal protein uL15 family. In terms of assembly, part of the 50S ribosomal subunit.

Its function is as follows. Binds to the 23S rRNA. The protein is Large ribosomal subunit protein uL15 of Dehalococcoides mccartyi (strain ATCC BAA-2100 / JCM 16839 / KCTC 5957 / BAV1).